The following is a 445-amino-acid chain: MPVGRSLSLDPNLLAQLQSHSPTLWLNPHQGMPLPDFAPTAADLADADARLRRCAGLLAELFAELRPSGGLIASPLQPAEPLKRAARAGHAQAGAWYVKRDDALPVAGSIKARGGFHEVLALAESIAERHGLAGADTDRRALASGAARARFARHTVMVGSTGNLGLSIGMLASALGFRTVAHMSADAKAWKKARLRTRGVEVVEHAGDYAKAVDAGRRQAAGMPCCHFVDDEGSRMLFLGYATAAAELAAQLAQAGRPVDARHPLFVHLPCGVGGAPGGIVYGLKALYGEHVHAFVAEPTASPCVLVQLAGDAAHPRSVYDIGLDNRTEADGLAVAQASPLAAALLRAQAAGAFTVDDRQLFAHLLDARERLGIDLEPSAAAAFGGPAWIAGSDAGRAYLRGRGIDPDAATHVIWATGGSLVPAQEHRRFQAHARAQRQVGGAGA.

The residue at position 111 (Lys-111) is an N6-(pyridoxal phosphate)lysine.

The protein belongs to the serine/threonine dehydratase family. DsdA subfamily. Requires pyridoxal 5'-phosphate as cofactor.

The catalysed reaction is D-serine = pyruvate + NH4(+). The protein is Probable D-serine dehydratase of Burkholderia pseudomallei (strain 1710b).